A 563-amino-acid chain; its full sequence is Lengsin (563 aa).

A disordered region spans residues 1 to 115 (MTDEGDLAQE…PNTDPTRYNA (115 aa)). Over residues 26-37 (SKLRRARRKVTK) the composition is skewed to basic residues. Composition is skewed to polar residues over residues 51-62 (ANSSEMSRNQIA) and 105-115 (SPNTDPTRYNA). Residues 137 to 231 (NHLQFVRFEA…VICDTFTVTG (95 aa)) form the GS beta-grasp domain. One can recognise a GS catalytic domain in the interval 238–563 (PRYIAKRQLR…EGNKFLEYFI (326 aa)).

Belongs to the glutamine synthetase family. As to quaternary structure, dodecamer. Interacts with BFSP2 and VIM. As to expression, expressed in lens.

In terms of biological role, may act as a component of the cytoskeleton or as a chaperone for the reorganization of intermediate filament proteins during terminal differentiation in the lens. Does not seem to have enzymatic activity. The polypeptide is Lengsin (Lgsn) (Mus musculus (Mouse)).